Here is a 370-residue protein sequence, read N- to C-terminus: Glutamate 5-kinase (370 aa).

K17 provides a ligand contact to ATP. S57, D144, and N156 together coordinate substrate. ATP-binding positions include 176 to 177 (SD) and 220 to 226 (TGGMVSK). One can recognise a PUA domain in the interval 282–360 (SGTLTLDDGA…SDLPAEMRRP (79 aa)).

Belongs to the glutamate 5-kinase family.

The protein resides in the cytoplasm. The enzyme catalyses L-glutamate + ATP = L-glutamyl 5-phosphate + ADP. Its pathway is amino-acid biosynthesis; L-proline biosynthesis; L-glutamate 5-semialdehyde from L-glutamate: step 1/2. Functionally, catalyzes the transfer of a phosphate group to glutamate to form L-glutamate 5-phosphate. This Mycolicibacterium gilvum (strain PYR-GCK) (Mycobacterium gilvum (strain PYR-GCK)) protein is Glutamate 5-kinase.